The following is a 268-amino-acid chain: Glutamate racemase (268 aa).

Substrate is bound by residues 14-15 (DS) and 46-47 (YG). The active-site Proton donor/acceptor is Cys78. Residue 79–80 (NT) coordinates substrate. The Proton donor/acceptor role is filled by Cys192. Residue 193-194 (TH) participates in substrate binding.

It belongs to the aspartate/glutamate racemases family.

The catalysed reaction is L-glutamate = D-glutamate. It participates in cell wall biogenesis; peptidoglycan biosynthesis. Provides the (R)-glutamate required for cell wall biosynthesis. The protein is Glutamate racemase of Sphingopyxis alaskensis (strain DSM 13593 / LMG 18877 / RB2256) (Sphingomonas alaskensis).